The sequence spans 519 residues: Cyclic AMP-responsive element-binding protein 3-like protein 2 (519 aa).

The Cytoplasmic portion of the chain corresponds to M1–S374. Disordered regions lie at residues G58–P77, Y85–E121, and G193–L261. Acidic residues predominate over residues A109–E119. Composition is skewed to low complexity over residues S205–P217 and P240–L249. The 64-residue stretch at A291–L354 folds into the bZIP domain. Positions K293–K322 are basic motif. The segment at L333–L354 is leucine-zipper. Residues T375–L395 traverse the membrane as a helical; Signal-anchor for type II membrane protein segment. The Lumenal portion of the chain corresponds to S396 to S519. The S1P recognition signature appears at R423 to L426. N-linked (GlcNAc...) asparagine glycans are attached at residues N485, N503, and N516.

The protein belongs to the bZIP family. ATF subfamily. In terms of assembly, binds DNA as a dimer. In terms of processing, upon ER stress, translocated to the Golgi apparatus, where it is processed by regulated intramembrane proteolysis (RIP) to release the cytosol-facing N-terminal transcription factor domain. The cleavage is performed sequentially by site-1 and site-2 proteases (S1P/mbtps1 and S2P/mbtps2).

The protein localises to the endoplasmic reticulum membrane. It localises to the nucleus. Transcription factor involved in unfolded protein response (UPR). In the absence of endoplasmic reticulum (ER) stress, inserted into ER membranes, with N-terminal DNA-binding and transcription activation domains oriented toward the cytosolic face of the membrane. In response to ER stress, transported to the Golgi, where it is cleaved in a site-specific manner by resident proteases S1P/mbtps1 and S2P/mbtps2. The released N-terminal cytosolic domain is translocated to the nucleus to effect transcription of specific target genes. Plays a critical role in chondrogenesis. May protect neuroblastoma cells from ER stress-induced death. In vitro activates transcription of target genes via direct binding to the CRE site. This Danio rerio (Zebrafish) protein is Cyclic AMP-responsive element-binding protein 3-like protein 2 (creb3l2).